We begin with the raw amino-acid sequence, 280 residues long: Small ribosomal subunit protein uS3 (280 aa).

The KH type-2 domain occupies 38 to 106 (IRRLLSTGLE…QVQLNILEVR (69 aa)). Residues 215–280 (AAAAPAGAER…PAAEPQSTES (66 aa)) are disordered. The segment covering 238-280 (SGASGTTATGTEAGRAAASADESTAAGQPAEAAPAAEPQSTES) has biased composition (low complexity).

Belongs to the universal ribosomal protein uS3 family. Part of the 30S ribosomal subunit. Forms a tight complex with proteins S10 and S14.

Functionally, binds the lower part of the 30S subunit head. Binds mRNA in the 70S ribosome, positioning it for translation. In Mycolicibacterium paratuberculosis (strain ATCC BAA-968 / K-10) (Mycobacterium paratuberculosis), this protein is Small ribosomal subunit protein uS3.